A 2007-amino-acid chain; its full sequence is Structural maintenance of chromosomes flexible hinge domain-containing protein 1 (2007 aa).

An N-acetylalanine modification is found at alanine 2. The tract at residues 111–702 is ATPase activity domain; sequence TKERIDFLPH…LSVTWPEGDE (592 aa). Serine 833 carries the post-translational modification Phosphoserine. N6-acetyllysine is present on lysine 1350. Lysine 1375 is covalently cross-linked (Glycyl lysine isopeptide (Lys-Gly) (interchain with G-Cter in SUMO2)). A Phosphothreonine modification is found at threonine 1500. The SMC hinge domain maps to 1721–1848; the sequence is GDILGKIAHL…DNLDAANHYR (128 aa). The residue at position 1803 (lysine 1803) is an N6-succinyllysine. The residue at position 1975 (serine 1975) is a Phosphoserine. A disordered region spans residues 1984 to 2007; it reads PIPTKRMRRESTRQNRRPKGDVPN.

It belongs to the SMC family. Highly divergent. In terms of assembly, homodimer; homodimerizes via its SMC hinge domain. Interacts with LRIF1. In terms of processing, sumoylated with SUMO1. In terms of tissue distribution, during embryogenesis, specifically expressed in immature olfactory sensory neurons.

Its subcellular location is the chromosome. It carries out the reaction ATP + H2O = ADP + phosphate + H(+). Its function is as follows. Non-canonical member of the structural maintenance of chromosomes (SMC) protein family that plays a key role in epigenetic silencing by regulating chromatin architecture. Promotes heterochromatin formation in both autosomes and chromosome X, probably by mediating the merge of chromatin compartments. Plays a key role in chromosome X inactivation in females by promoting the spreading of heterochromatin. Recruited to inactivated chromosome X by Xist RNA and acts by mediating the merge of chromatin compartments: promotes random chromatin interactions that span the boundaries of existing structures, leading to create a compartment-less architecture typical of inactivated chromosome X. Required to facilitate Xist RNA spreading. Also required for silencing of a subset of clustered autosomal loci in somatic cells, such as the DUX4 locus. Has ATPase activity; may participate in structural manipulation of chromatin in an ATP-dependent manner as part of its role in gene expression regulation. Also plays a role in DNA repair: localizes to sites of DNA double-strand breaks in response to DNA damage to promote the repair of DNA double-strand breaks. Acts by promoting non-homologous end joining (NHEJ) and inhibiting homologous recombination (HR) repair. Required during preimplantation development, probably acts by regulating chromatin architecture. In Mus musculus (Mouse), this protein is Structural maintenance of chromosomes flexible hinge domain-containing protein 1.